The sequence spans 238 residues: Monocyte to macrophage differentiation factor (238 aa).

The Cytoplasmic portion of the chain corresponds to 1 to 28 (MQFRNRFQRFMNHRAPANGRYKPTCYEH). A helical membrane pass occupies residues 29-49 (AANCYTHAFLIVPAIVGSALL). The Lumenal portion of the chain corresponds to 50 to 61 (HRLSDDCWEKIT). The helical transmembrane segment at 62–82 (AWIYGMGLCALFIVSTVFHIV) threads the bilayer. The Cytoplasmic portion of the chain corresponds to 83–101 (SWKKSHLRTVEHCFHMCDR). Residues 102–122 (MVIYFFIAASYAPWLNLRELG) form a helical membrane-spanning segment. P123 is a topological domain (lumenal). The helical transmembrane segment at 124–144 (LASHMRWFIWLMAAGGTIYVF) threads the bilayer. Topologically, residues 145 to 151 (LYHEKYK) are cytoplasmic. A helical transmembrane segment spans residues 152–172 (VVELFFYLTMGFSPALVVTSM). The Lumenal portion of the chain corresponds to 173-174 (NN). The helical transmembrane segment at 175–195 (TDGLQELACGGLIYCLGVVFF) threads the bilayer. At 196-198 (KSD) the chain is on the cytoplasmic side. Residues 199-219 (GIIPFAHAIWHLFVATAAAVH) form a helical membrane-spanning segment. Topologically, residues 220–238 (YYAIWKYLYRSPTDFIRHL) are lumenal.

Belongs to the ADIPOR family. As to expression, preferentially expressed in the brain.

It localises to the late endosome membrane. Its subcellular location is the lysosome membrane. In terms of biological role, is involved in the dynamics of lysosomal membranes associated with microglial activation following brain lesion. The protein is Monocyte to macrophage differentiation factor of Rattus norvegicus (Rat).